The chain runs to 172 residues: Single-stranded DNA-binding protein 2 (172 aa).

Positions Val-6–Gln-111 constitute an SSB domain. The DNA-binding element occupies Trp-55–Phe-61. The interval Leu-113–Phe-172 is disordered. Positions Gln-119–Pro-153 are enriched in low complexity. The Important for interaction with partner proteins motif lies at Asp-167–Phe-172.

As to quaternary structure, homotetramer.

Plays an important role in DNA replication, recombination and repair. Binds to ssDNA and to an array of partner proteins to recruit them to their sites of action during DNA metabolism. The polypeptide is Single-stranded DNA-binding protein 2 (ssb2) (Salmonella typhimurium (strain LT2 / SGSC1412 / ATCC 700720)).